We begin with the raw amino-acid sequence, 150 residues long: Large ribosomal subunit protein bL9 (150 aa).

It belongs to the bacterial ribosomal protein bL9 family.

Functionally, binds to the 23S rRNA. The protein is Large ribosomal subunit protein bL9 of Latilactobacillus sakei subsp. sakei (strain 23K) (Lactobacillus sakei subsp. sakei).